Consider the following 183-residue polypeptide: Putative 3-methyladenine DNA glycosylase (183 aa).

The protein belongs to the DNA glycosylase MPG family.

The polypeptide is Putative 3-methyladenine DNA glycosylase (Legionella pneumophila subsp. pneumophila (strain Philadelphia 1 / ATCC 33152 / DSM 7513)).